The sequence spans 215 residues: Protein N-lysine methyltransferase METTL21A (215 aa).

Residues W47, 73 to 75, D94, W125, and A141 each bind S-adenosyl-L-methionine; that span reads GAG.

It belongs to the methyltransferase superfamily. METTL21 family.

The protein localises to the cytoplasm. It catalyses the reaction L-lysyl-[protein] + 3 S-adenosyl-L-methionine = N(6),N(6),N(6)-trimethyl-L-lysyl-[protein] + 3 S-adenosyl-L-homocysteine + 3 H(+). Protein-lysine methyltransferase that selectively trimethylates residues in heat shock protein 70 (HSP70) family members. In Xenopus tropicalis (Western clawed frog), this protein is Protein N-lysine methyltransferase METTL21A (mettl21a).